The sequence spans 1031 residues: MMS19 nucleotide excision repair protein homolog (1031 aa).

The residue at position 2 (Ala2) is an N-acetylalanine. HEAT repeat units lie at residues 867 to 905 (QRFF…RLPK), 909 to 947 (LPEL…EAPQ), 950 to 988 (SLHV…LPTS), and 991 to 1029 (LPYK…LGSP). Ser1028 carries the phosphoserine modification.

Belongs to the MET18/MMS19 family. In terms of assembly, component of the CIA complex. In the CIA complex, interacts directly with CIAO2B and CIAO3. Component of the MMXD complex, composed of CIAO1, ERCC2, CIAO2B, MMS19 and SLC25A5. Interacts with CIAO2B; the interaction is direct. Interacts with ERCC2/XPD; the interaction is direct. Interacts with ERCC3/XPB and NCOA3/RAC3. Interacts with RTEL1; the interaction mediates the association of RTEL1 with the CIA complex. Interacts with BRIP1. Interacts with KIF4A; the interaction facilitates the transfer of Fe-S clusters to KIF4A to ensure proper localization of KIF4A to the mitotic machinery components. Interacts with CCDC117; the interaction is indirect. Ubiquitinated; undergoes 'Lys-48'-linked polyubiquitination. As to expression, ubiquitously expressed with higher expression in testis.

It is found in the nucleus. The protein localises to the cytoplasm. The protein resides in the cytoskeleton. Its subcellular location is the spindle. Its function is as follows. Key component of the cytosolic iron-sulfur protein assembly (CIA) complex, a multiprotein complex that mediates the incorporation of iron-sulfur cluster into apoproteins specifically involved in DNA metabolism and genomic integrity. In the CIA complex, MMS19 acts as an adapter between early-acting CIA components and a subset of cellular target Fe/S proteins such as ERCC2/XPD, FANCJ and RTEL1, thereby playing a key role in nucleotide excision repair (NER), homologous recombination-mediated double-strand break DNA repair, DNA replication and RNA polymerase II (POL II) transcription. As a CIA complex component and in collaboration with CIAO1 and CIAO2, binds to and facilitates the assembly of most cytosolic-nuclear Fe/S proteins. As part of the mitotic spindle-associated MMXD complex, plays a role in chromosome segregation, probably by facilitating iron-sulfur cluster assembly into ERCC2/XPD. Together with CIAO2, facilitates the transfer of Fe-S clusters to the motor protein KIF4A, which ensures proper localization of KIF4A to mitotic machinery components to promote the progression of mitosis. Indirectly acts as a transcriptional coactivator of estrogen receptor (ER), via its role in iron-sulfur insertion into some component of the TFIIH-machinery. The chain is MMS19 nucleotide excision repair protein homolog from Mus musculus (Mouse).